The sequence spans 129 residues: Phosphoribosyl-AMP cyclohydrolase (129 aa).

Asp-76 contributes to the Mg(2+) binding site. Cys-77 contributes to the Zn(2+) binding site. Residues Asp-78 and Asp-80 each contribute to the Mg(2+) site. Residues Cys-97 and Cys-104 each contribute to the Zn(2+) site.

Belongs to the PRA-CH family. In terms of assembly, homodimer. Mg(2+) serves as cofactor. Zn(2+) is required as a cofactor.

Its subcellular location is the cytoplasm. It catalyses the reaction 1-(5-phospho-beta-D-ribosyl)-5'-AMP + H2O = 1-(5-phospho-beta-D-ribosyl)-5-[(5-phospho-beta-D-ribosylamino)methylideneamino]imidazole-4-carboxamide. It functions in the pathway amino-acid biosynthesis; L-histidine biosynthesis; L-histidine from 5-phospho-alpha-D-ribose 1-diphosphate: step 3/9. Its function is as follows. Catalyzes the hydrolysis of the adenine ring of phosphoribosyl-AMP. The sequence is that of Phosphoribosyl-AMP cyclohydrolase from Polaromonas naphthalenivorans (strain CJ2).